The sequence spans 364 residues: Large ribosomal subunit protein uL22m (364 aa).

It belongs to the universal ribosomal protein uL22 family. In terms of assembly, component of the mitochondrial large ribosomal subunit (mt-LSU). Mature N.crassa 74S mitochondrial ribosomes consist of a small (37S) and a large (54S) subunit. The 37S small subunit contains a 16S ribosomal RNA (16S mt-rRNA) and 32 different proteins. The 54S large subunit contains a 23S rRNA (23S mt-rRNA) and 42 different proteins. uL22m forms the wall of the exit tunnel.

It localises to the mitochondrion. Functionally, component of the mitochondrial ribosome (mitoribosome), a dedicated translation machinery responsible for the synthesis of mitochondrial genome-encoded proteins, including at least some of the essential transmembrane subunits of the mitochondrial respiratory chain. The mitoribosomes are attached to the mitochondrial inner membrane and translation products are cotranslationally integrated into the membrane. The protein is Large ribosomal subunit protein uL22m (mrpl22) of Neurospora crassa (strain ATCC 24698 / 74-OR23-1A / CBS 708.71 / DSM 1257 / FGSC 987).